The chain runs to 879 residues: Probable phospholipid transport protein YdbH (879 aa).

Residues 1–6 (MLGKYK) lie on the Cytoplasmic side of the membrane. Residues 7 to 29 (AVLALLLLIILVPLTLLMTLGLW) traverse the membrane as a helical segment. The Periplasmic portion of the chain corresponds to 30–879 (VPTLAGIWLP…PQGKECEEKQ (850 aa)).

Interacts with the outer membrane lipoprotein YnbE.

It is found in the cell inner membrane. In terms of biological role, involved in outer membrane lipid homeostasis. Interacts with the outer membrane lipoprotein YnbE to form a functional protein bridge connecting the inner and outer membranes of the cell. Likely transports phospholipids between the inner membrane and the outer membrane. It would provide a bridge-like structure that protects phospholipids as they travel across the periplasm. Its function is as follows. TamB, YdbH and YhdP are redundant, but not equivalent, in performing an essential function for growth and maintaining lipid homeostasis in the outer membrane. Any of these three proteins is sufficient for growth. The sequence is that of Probable phospholipid transport protein YdbH (ydbH) from Escherichia coli (strain K12).